A 520-amino-acid polypeptide reads, in one-letter code: Aldehyde dehydrogenase 5, mitochondrial (520 aa).

A mitochondrion-targeting transit peptide spans 1-23 (MLSRTRAAAPNSRIFTRSLLRLY). Residue 266-271 (GSTATG) participates in NAD(+) binding. Residue E288 is the Proton acceptor of the active site. Residue C322 is the Nucleophile of the active site.

It belongs to the aldehyde dehydrogenase family.

The protein resides in the mitochondrion matrix. It catalyses the reaction an aldehyde + NADP(+) + H2O = a carboxylate + NADPH + 2 H(+). It carries out the reaction an aldehyde + NAD(+) + H2O = a carboxylate + NADH + 2 H(+). The protein operates within alcohol metabolism; ethanol degradation; acetate from ethanol: step 2/2. Its activity is regulated as follows. Induced by potassium ions. Its function is as follows. Minor mitochondrial aldehyde dehydrogenase isoform. Plays a role in regulation or biosynthesis of electron transport chain components. Involved in the biosynthesis of acetate during anaerobic growth on glucose. This chain is Aldehyde dehydrogenase 5, mitochondrial (ALD5), found in Saccharomyces cerevisiae (strain YJM789) (Baker's yeast).